Consider the following 138-residue polypeptide: MRHARGYRRLNRTHEHRKALFANMAGSLIEHEQIKTTLPKAKELRPIVEKLITLAKRGDLHARRQAASQLKQHAYVAKLFDVLGPRYAERQGGYVRIMKAGFRYGDMAPMAIIEFVDRDVDAKGAADKAREAADEDAL.

It belongs to the bacterial ribosomal protein bL17 family. Part of the 50S ribosomal subunit. Contacts protein L32.

The sequence is that of Large ribosomal subunit protein bL17 from Dinoroseobacter shibae (strain DSM 16493 / NCIMB 14021 / DFL 12).